A 132-amino-acid chain; its full sequence is Small ribosomal subunit protein uS8 (132 aa).

Belongs to the universal ribosomal protein uS8 family. In terms of assembly, part of the 30S ribosomal subunit. Contacts proteins S5 and S12.

Functionally, one of the primary rRNA binding proteins, it binds directly to 16S rRNA central domain where it helps coordinate assembly of the platform of the 30S subunit. This Bacillus pumilus (strain SAFR-032) protein is Small ribosomal subunit protein uS8.